We begin with the raw amino-acid sequence, 150 residues long: UPF0756 membrane protein Dd1591_2981 (150 aa).

Transmembrane regions (helical) follow at residues 10-32 (ILLALAALGIISQNMTVTLAILF), 51-71 (YGLSFGVLVLTIGVMAPIASG), 88-108 (LMAVAIGVAVSWLGGRGVVLM), and 127-147 (ALFRGVPVGPLIAAGLLSLLI).

It belongs to the UPF0756 family.

It is found in the cell membrane. The chain is UPF0756 membrane protein Dd1591_2981 from Dickeya chrysanthemi (strain Ech1591) (Dickeya zeae (strain Ech1591)).